Consider the following 426-residue polypeptide: Glutamate-1-semialdehyde 2,1-aminomutase (426 aa).

Lys-265 carries the N6-(pyridoxal phosphate)lysine modification.

Belongs to the class-III pyridoxal-phosphate-dependent aminotransferase family. HemL subfamily. Homodimer. Requires pyridoxal 5'-phosphate as cofactor.

Its subcellular location is the cytoplasm. The catalysed reaction is (S)-4-amino-5-oxopentanoate = 5-aminolevulinate. It functions in the pathway porphyrin-containing compound metabolism; protoporphyrin-IX biosynthesis; 5-aminolevulinate from L-glutamyl-tRNA(Glu): step 2/2. The sequence is that of Glutamate-1-semialdehyde 2,1-aminomutase from Yersinia enterocolitica serotype O:8 / biotype 1B (strain NCTC 13174 / 8081).